We begin with the raw amino-acid sequence, 337 residues long: Peroxidase 14 (337 aa).

A signal peptide spans 1 to 22 (MARIGSFLILLSLTYALTLCIC). N-linked (GlcNAc...) asparagine glycosylation occurs at Asn24. Intrachain disulfides connect Cys44–Cys124, Cys77–Cys82, Cys130–Cys331, and Cys209–Cys241. The Proton acceptor role is filled by His75. Ca(2+)-binding residues include Asp76, Val79, Gly81, Asp83, and Ser85. Pro172 contacts substrate. An N-linked (GlcNAc...) asparagine glycan is attached at Asn191. His202 lines the heme b pocket. Thr203 lines the Ca(2+) pocket. Residues Asn218 and Asn249 are each glycosylated (N-linked (GlcNAc...) asparagine). Ca(2+) contacts are provided by Asp254, Ser257, and Asp262.

It belongs to the peroxidase family. Classical plant (class III) peroxidase subfamily. Requires heme b as cofactor. It depends on Ca(2+) as a cofactor.

The protein resides in the secreted. The enzyme catalyses 2 a phenolic donor + H2O2 = 2 a phenolic radical donor + 2 H2O. Removal of H(2)O(2), oxidation of toxic reductants, biosynthesis and degradation of lignin, suberization, auxin catabolism, response to environmental stresses such as wounding, pathogen attack and oxidative stress. These functions might be dependent on each isozyme/isoform in each plant tissue. The protein is Peroxidase 14 (PER14) of Arabidopsis thaliana (Mouse-ear cress).